The chain runs to 612 residues: MFS siderochrome iron transporter B (612 aa).

Over 1–86 the chain is Cytoplasmic; that stretch reads MLHVLSVGPS…GAQAGVKKIE (86 aa). A disordered region spans residues 55-78; sequence DKEAAHAPANAETNNEEANPSDGA. Low complexity predominate over residues 60–72; the sequence is HAPANAETNNEEA. The chain crosses the membrane as a helical span at residues 87-104; it reads AVTLSWTRGTAIWFLTLV. Residues 105–127 lie on the Extracellular side of the membrane; that stretch reads NDFRLSMYTSLNAYATSSFLGHS. The helical transmembrane segment at 128–148 threads the bilayer; the sequence is LLTVINIVSYVMGGSVYIPMA. The Cytoplasmic segment spans residues 149 to 156; it reads KALDLWGR. Residues 157–177 traverse the membrane as a helical segment; sequence AEGFLLMTFFCILGLILLASS. At 178 to 187 the chain is on the extracellular side; that stretch reads QNLPTYCAGQ. The helical transmembrane segment at 188-208 threads the bilayer; that stretch reads VFYKVGFGGLSYTWNVLAADV. Over 209–215 the chain is Cytoplasmic; it reads TNLRNRG. A helical membrane pass occupies residues 216-236; it reads LAFAFTSSPALISAFAGSKAA. At 237–246 the chain is on the extracellular side; sequence SDLLAHSTWR. The chain crosses the membrane as a helical span at residues 247-267; the sequence is WGFGMWAIILPVVALPIYGLL. Topologically, residues 268 to 302 are cytoplasmic; it reads AYHLRQAEKKGVLVKETRDWSITPKTVWWAIMEFD. Residues 303–323 traverse the membrane as a helical segment; the sequence is LPGVLLFAGGFVIFLLPFTLA. Residues 324 to 334 lie on the Extracellular side of the membrane; sequence ATAPHGYQTDY. Residues 335–355 form a helical membrane-spanning segment; it reads IIAMITLGLALIIAFGFYEML. The Cytoplasmic segment spans residues 356–370; sequence VAPVPFLNYKFLIDR. The chain crosses the membrane as a helical span at residues 371–393; that stretch reads TVLGACLLDMTYQVSYYCYASYL. At 394-409 the chain is on the extracellular side; the sequence is PSFLQVVYELDVATAG. The chain crosses the membrane as a helical span at residues 410–430; it reads YVTNTFSVVSFVFLFFAGWLI. At 431–435 the chain is on the cytoplasmic side; the sequence is RWTGR. The chain crosses the membrane as a helical span at residues 436–456; that stretch reads FKWILWVCVPLYIFGLGLMIH. The Extracellular segment spans residues 457 to 463; the sequence is FRQPGGY. Residues 464–484 form a helical membrane-spanning segment; that stretch reads IGYIVMCEIFFSVAGSVFILC. The Cytoplasmic portion of the chain corresponds to 485–498; it reads VQLAVLASVDHQHV. The helical transmembrane segment at 499–519 threads the bilayer; the sequence is AAVLALLFVMGSIGGSIGSAI. The Extracellular portion of the chain corresponds to 520–575; that stretch reads CGAIWTSTFLSRLERNLPASAMPDLSLIYSSLPTQLSYPVGSATRTAIVEAYGYAQ. The chain crosses the membrane as a helical span at residues 576 to 596; the sequence is ARMLIAGTAFMVLGFIWVGMM. Topologically, residues 597 to 612 are cytoplasmic; that stretch reads RNLNVKNMTQTKGNVV.

This sequence belongs to the major facilitator superfamily.

The protein resides in the cell tip. It localises to the cytoplasmic vesicle membrane. The protein localises to the cell membrane. Functionally, major facilitator transporter involved in triacetylfusarinine C (TAFC) uptake. Can also transport ferricrocin and coprogen, but not ferrichrysin. MirB plays a crucial role for virulence in a murine model of pulmonary aspergillosis, indicating that TAFC-mediated iron uptake plays a dominant role during infection. The protein is MFS siderochrome iron transporter B of Aspergillus fumigatus (strain ATCC MYA-4609 / CBS 101355 / FGSC A1100 / Af293) (Neosartorya fumigata).